Reading from the N-terminus, the 159-residue chain is Regulatory protein RecX (159 aa).

Belongs to the RecX family.

It localises to the cytoplasm. Its function is as follows. Modulates RecA activity. In Chlorobium limicola (strain DSM 245 / NBRC 103803 / 6330), this protein is Regulatory protein RecX.